The chain runs to 893 residues: Genome polyprotein 2 (893 aa).

Positions 109–229 (TAEFKSGFCY…GCEYMLYPVG (121 aa)) constitute a Peptidase C6 domain. Active-site for helper component proteinase activity residues include cysteine 117 and histidine 189. The disordered stretch occupies residues 502 to 539 (WVTLNSGDDDDDQSGGGGGGPQTPGGQPPVPHTRGTHQ). Residues 515–524 (SGGGGGGPQT) show a composition bias toward gly residues.

This sequence belongs to the bymoviruses polyprotein 2 family. The viral RNA2 of bymoviruses is expressed as a single polyprotein which undergoes post-translational proteolytic processing resulting in the production of at least two individual proteins. The HC-pro cleaves its C-terminus autocatalytically (Potential).

The catalysed reaction is Hydrolyzes a Gly-|-Gly bond at its own C-terminus, commonly in the sequence -Tyr-Xaa-Val-Gly-|-Gly, in the processing of the potyviral polyprotein.. The sequence is that of Genome polyprotein 2 (RNA2) from Barley mild mosaic virus (strain ASL) (BaMMV).